We begin with the raw amino-acid sequence, 772 residues long: Endoplasmic reticulum membrane sensor NFE2L1 (772 aa).

Residues 7 to 24 (YFTEGLIQFTILLSLIGV) traverse the membrane as a helical; Signal-anchor for type II membrane protein segment. The tract at residues 191-199 (IFDYSHRQK) is cholesterol recognition/amino acid consensus (CRAC) region. Residues 198-216 (QKESEVDKELSDGRERGDG) are compositionally biased toward basic and acidic residues. Residues 198-223 (QKESEVDKELSDGRERGDGWRSAGGQ) form a disordered region. N332, N340, N362, N402, N407, N414, N425, and N429 each carry an N-linked (GlcNAc...) asparagine glycan. Residues 472–531 (EEEFDSDSGLSLDSGHSPASLSSSEASSSSSSSSSSSSSSSSSSSSFSEEGAVGYSSDSE) form a disordered region. The segment covering 478-519 (DSGLSLDSGHSPASLSSSEASSSSSSSSSSSSSSSSSSSSFS) has biased composition (low complexity). An N-linked (GlcNAc...) asparagine glycan is attached at N574. The segment at 581–613 (PGTLDPEEPKLPSVGKKSSKEKPSEFLDKQMSR) is disordered. Residues 598–613 (SSKEKPSEFLDKQMSR) are compositionally biased toward basic and acidic residues. Residues 654–717 (LIRDIRRRGK…RQMKQKVQNL (64 aa)) enclose the bZIP domain. Positions 656–675 (RDIRRRGKNKMAAQNCRKRK) are basic motif. The tract at residues 682–696 (LERDVEDLQRDKSKL) is leucine-zipper. The short motif at 761 to 768 (RRQERKQK) is the Nuclear localization signal element.

This sequence belongs to the bZIP family. CNC subfamily. In terms of assembly, interacts (via the bZIP domain) with small MAF protein (MAFF, MAFG or MAFK); required for binding to antioxidant response elements (AREs) on DNA. In terms of processing, cleaved at Leu-104 following retrotranslocation, releasing the protein from the endoplasmic reticulum membrane and forming the transcription factor NRF1 that translocates into the nucleus.

The protein resides in the endoplasmic reticulum membrane. It localises to the nucleus. Its function is as follows. Endoplasmic reticulum membrane sensor that translocates into the nucleus in response to various stresses to act as a transcription factor. Constitutes a precursor of the transcription factor NRF1. Able to detect various cellular stresses, such as cholesterol excess, oxidative stress or proteasome inhibition. In response to stress, it is released from the endoplasmic reticulum membrane following cleavage and translocates into the nucleus to form the transcription factor NRF1. Acts as a key sensor of cholesterol excess: in excess cholesterol conditions, the endoplasmic reticulum membrane form of the protein directly binds cholesterol via its CRAC motif, preventing cleavage and release of the transcription factor NRF1, thereby allowing expression of genes promoting cholesterol removal. Involved in proteasome homeostasis: in response to proteasome inhibition, it is released from the endoplasmic reticulum membrane, translocates to the nucleus and activates expression of genes encoding proteasome subunits. In terms of biological role, CNC-type bZIP family transcription factor that translocates to the nucleus and regulates expression of target genes in response to various stresses. Heterodimerizes with small-Maf proteins (MAFF, MAFG or MAFK) and binds DNA motifs including the antioxidant response elements (AREs), which regulate expression of genes involved in oxidative stress response. Activates or represses expression of target genes, depending on the context. Plays a key role in cholesterol homeostasis by acting as a sensor of cholesterol excess: in low cholesterol conditions, translocates into the nucleus and represses expression of genes involved in defense against cholesterol excess. In excess cholesterol conditions, the endoplasmic reticulum membrane form of the protein directly binds cholesterol via its CRAC motif, preventing cleavage and release of the transcription factor NRF1, thereby allowing expression of genes promoting cholesterol removal. Critical for redox balance in response to oxidative stress: acts by binding the AREs motifs on promoters and mediating activation of oxidative stress response genes. Involved in proteasome homeostasis: in response to proteasome inhibition, mediates the 'bounce-back' of proteasome subunits by translocating into the nucleus and activating expression of genes encoding proteasome subunits. The sequence is that of Endoplasmic reticulum membrane sensor NFE2L1 from Gallus gallus (Chicken).